Consider the following 96-residue polypeptide: NADH-ubiquinone oxidoreductase chain 4L (96 aa).

3 consecutive transmembrane segments (helical) span residues 2–22 (IMFL…FCFV), 28–48 (LLSM…MLFI), and 62–82 (MFLT…VSMI).

Belongs to the complex I subunit 4L family.

It localises to the mitochondrion membrane. The catalysed reaction is a ubiquinone + NADH + 5 H(+)(in) = a ubiquinol + NAD(+) + 4 H(+)(out). Functionally, core subunit of the mitochondrial membrane respiratory chain NADH dehydrogenase (Complex I) that is believed to belong to the minimal assembly required for catalysis. Complex I functions in the transfer of electrons from NADH to the respiratory chain. The immediate electron acceptor for the enzyme is believed to be ubiquinone. This Drosophila nasuta F (Fruit fly) protein is NADH-ubiquinone oxidoreductase chain 4L (mt:ND4L).